The chain runs to 385 residues: Digeranylgeranylglycerophospholipid reductase 2 (385 aa).

FAD-binding residues include Ala-13, Glu-32, Cys-43, Ala-44, Gly-46, Arg-95, Ala-119, Asp-273, Gly-285, and Ile-286.

It belongs to the geranylgeranyl reductase family. DGGGPL reductase subfamily. The cofactor is FAD.

It carries out the reaction a 2,3-bis-O-phytanyl-sn-glycerol 1-phospholipid + 8 A = a 2,3-bis-O-(geranylgeranyl)-sn-glycerol 1-phospholipid + 8 AH2. The catalysed reaction is 2,3-bis-O-(phytanyl)-sn-glycerol 1-phosphate + 8 A = 2,3-bis-O-(geranylgeranyl)-sn-glycerol 1-phosphate + 8 AH2. The enzyme catalyses CDP-2,3-bis-O-(geranylgeranyl)-sn-glycerol + 8 AH2 = CDP-2,3-bis-O-(phytanyl)-sn-glycerol + 8 A. It catalyses the reaction archaetidylserine + 8 AH2 = 2,3-bis-O-phytanyl-sn-glycero-3-phospho-L-serine + 8 A. It functions in the pathway membrane lipid metabolism; glycerophospholipid metabolism. Its function is as follows. Is involved in the reduction of 2,3-digeranylgeranylglycerophospholipids (unsaturated archaeols) into 2,3-diphytanylglycerophospholipids (saturated archaeols) in the biosynthesis of archaeal membrane lipids. Catalyzes the formation of archaetidic acid (2,3-di-O-phytanyl-sn-glyceryl phosphate) from 2,3-di-O-geranylgeranylglyceryl phosphate (DGGGP) via the hydrogenation of each double bond of the isoprenoid chains. Is also probably able to reduce double bonds of geranyl groups in CDP-2,3-bis-O-(geranylgeranyl)-sn-glycerol and archaetidylserine, thus acting at various stages in the biosynthesis of archaeal membrane lipids. The chain is Digeranylgeranylglycerophospholipid reductase 2 from Methanothermobacter thermautotrophicus (strain ATCC 29096 / DSM 1053 / JCM 10044 / NBRC 100330 / Delta H) (Methanobacterium thermoautotrophicum).